A 144-amino-acid chain; its full sequence is 3-dehydroquinate dehydratase (144 aa).

The active-site Proton acceptor is Y24. Positions 73, 79, and 86 each coordinate substrate. Catalysis depends on H99, which acts as the Proton donor. Substrate is bound by residues 100 to 101 (LS) and R110.

It belongs to the type-II 3-dehydroquinase family. As to quaternary structure, homododecamer.

It carries out the reaction 3-dehydroquinate = 3-dehydroshikimate + H2O. It functions in the pathway metabolic intermediate biosynthesis; chorismate biosynthesis; chorismate from D-erythrose 4-phosphate and phosphoenolpyruvate: step 3/7. Its function is as follows. Catalyzes a trans-dehydration via an enolate intermediate. The polypeptide is 3-dehydroquinate dehydratase (Shewanella putrefaciens (strain CN-32 / ATCC BAA-453)).